The primary structure comprises 155 residues: Interleukin-2 (155 aa).

Residues 1-20 form the signal peptide; the sequence is MYKIQLLSCIALTLALVANG. A glycan (O-linked (GalNAc...) threonine) is linked at threonine 23. Cysteines 79 and 127 form a disulfide.

It belongs to the IL-2 family.

Its subcellular location is the secreted. Functionally, cytokine produced by activated CD4-positive helper T-cells and to a lesser extend activated CD8-positive T-cells and natural killer (NK) cells that plays pivotal roles in the immune response and tolerance. Binds to a receptor complex composed of either the high-affinity trimeric IL-2R (IL2RA/CD25, IL2RB/CD122 and IL2RG/CD132) or the low-affinity dimeric IL-2R (IL2RB and IL2RG). Interaction with the receptor leads to oligomerization and conformation changes in the IL-2R subunits resulting in downstream signaling starting with phosphorylation of JAK1 and JAK3. In turn, JAK1 and JAK3 phosphorylate the receptor to form a docking site leading to the phosphorylation of several substrates including STAT5. This process leads to activation of several pathways including STAT, phosphoinositide-3-kinase/PI3K and mitogen-activated protein kinase/MAPK pathways. Functions as a T-cell growth factor and can increase NK-cell cytolytic activity as well. Promotes strong proliferation of activated B-cells and subsequently immunoglobulin production. Plays a pivotal role in regulating the adaptive immune system by controlling the survival and proliferation of regulatory T-cells, which are required for the maintenance of immune tolerance. Moreover, participates in the differentiation and homeostasis of effector T-cell subsets, including Th1, Th2, Th17 as well as memory CD8-positive T-cells. The chain is Interleukin-2 (IL2) from Boselaphus tragocamelus (Nilgai).